A 706-amino-acid chain; its full sequence is Gamma-adducin (706 aa).

The segment covering 1–10 has biased composition (polar residues); it reads MSSDASQGVI. Residues 1–20 are disordered; sequence MSSDASQGVITTPPPPSMPH. The residue at position 2 (Ser-2) is an N-acetylserine. Phosphoserine occurs at positions 42, 64, 402, 414, 423, 442, and 461. Disordered stretches follow at residues 471-497, 535-555, 575-610, and 666-706; these read AEDS…LNTN, PSTM…NPFS, GLED…KLEE, and EKIE…KVEA. Residue Lys-484 forms a Glycyl lysine isopeptide (Lys-Gly) (interchain with G-Cter in SUMO2) linkage. Residues Ser-585, Ser-590, Ser-673, Ser-677, Ser-679, Ser-681, and Ser-683 each carry the phosphoserine modification. Residues 589 to 602 show a composition bias toward low complexity; the sequence is SSVSQIQSQTQSPQ. Basic residues predominate over residues 682-706; the sequence is PSKKKKKFRTPSFLKKNKKKEKVEA. The interval 684–701 is interaction with calmodulin; sequence KKKKKFRTPSFLKKNKKK.

Belongs to the aldolase class II family. Adducin subfamily. In terms of assembly, heterodimer of an alpha and a gamma subunit. In terms of processing, sumoylated. Proteolytically cleaved by asparagine endopeptidase (AEP) into 2 fragments. Overexpression of the 1-357 fragment induces neuronal apoptosis, and overexpression of either 1-357 or 358-706 fragment increases the degeneration of dendritic spines. Overexpression of the 1-357 fragment impairs neurite outgrowth by downregulating the expression of Rac2, and induces synaptic dysfunction and cognitive impairments in tau P301S transgenic mice, a mouse model for Alzheimer disease (AD). Ubiquitously expressed. As to expression, cleavage fragment 1-357 is abundantly expressed in the brain of patients with Alzheimer disease (AD), but hardly detectable in age-matched control individuals (at protein level).

It is found in the cytoplasm. The protein resides in the cytoskeleton. Its subcellular location is the cell membrane. Functionally, membrane-cytoskeleton-associated protein that promotes the assembly of the spectrin-actin network. Plays a role in actin filament capping. Binds to calmodulin. Involved in myogenic reactivity of the renal afferent arteriole (Af-art), renal interlobular arteries and middle cerebral artery (MCA) to increased perfusion pressure. Involved in regulation of potassium channels in the vascular smooth muscle cells (VSMCs) of the Af-art and MCA ex vivo. Involved in regulation of glomerular capillary pressure, glomerular filtration rate (GFR) and glomerular nephrin expression in response to hypertension. Involved in renal blood flow (RBF) autoregulation. Plays a role in podocyte structure and function. Regulates globular monomer actin (G-actin) and filamentous polymer actin (F-actin) ratios in the primary podocytes affecting actin cytoskeleton organization. Regulates expression of synaptopodin, RhoA, Rac1 and CDC42 in the renal cortex and the primary podocytes. Regulates expression of nephrin in the glomeruli and in the primary podocytes, expression of nephrin and podocinin in the renal cortex, and expression of focal adhesion proteins integrin alpha-3 and integrin beta-1 in the glomeruli. Involved in cell migration and cell adhesion of podocytes, and in podocyte foot process effacement. Regulates expression of profibrotics markers MMP2, MMP9, TGF beta-1, tubular tight junction protein E-cadherin, and mesenchymal markers vimentin and alpha-SMA. Promotes the growth of neurites. The protein is Gamma-adducin (ADD3) of Homo sapiens (Human).